Here is a 545-residue protein sequence, read N- to C-terminus: Cannabidiolic acid synthase-like 2 (545 aa).

The first 28 residues, 1 to 28, serve as a signal peptide directing secretion; it reads MKCSTFCFWYVCKIIFFFLSFNIQISIA. Cys-37 and Cys-99 form a disulfide bridge. Residues Asn-45, Asn-65, Asn-89, and Asn-168 are each glycosylated (N-linked (GlcNAc...) asparagine). The FAD-binding PCMH-type domain maps to 77 to 251; it reads TTPKPLVITT…AAWKIRLVAV (175 aa). The segment at residues 114 to 176 is a cross-link (6-(S-cysteinyl)-8alpha-(pros-histidyl)-FAD (His-Cys)); that stretch reads HDAEGMSYIS…ENLSFPAGYC (63 aa). His-292 contacts substrate. N-linked (GlcNAc...) asparagine glycans are attached at residues Asn-297, Asn-305, Asn-329, and Asn-361. Residue Tyr-417 coordinates substrate. Asn-467 carries N-linked (GlcNAc...) asparagine glycosylation. Residue Tyr-484 is the Proton acceptor of the active site. Asn-499 carries N-linked (GlcNAc...) asparagine glycosylation.

The protein belongs to the oxygen-dependent FAD-linked oxidoreductase family. FAD serves as cofactor. The FAD cofactor is bound via a bicovalent 6-S-cysteinyl, 8alpha-N1-histidyl FAD linkage.

It is found in the secreted. Functionally, has no cannabidiolic acid synthase activity. The polypeptide is Cannabidiolic acid synthase-like 2 (CBDAS3) (Cannabis sativa (Hemp)).